Consider the following 1372-residue polypeptide: DNA-directed RNA polymerase subunit beta' (1372 aa).

4 residues coordinate Zn(2+): C69, C71, C84, and C87. D460, D462, and D464 together coordinate Mg(2+). Positions 808, 882, 889, and 892 each coordinate Zn(2+).

This sequence belongs to the RNA polymerase beta' chain family. As to quaternary structure, the RNAP catalytic core consists of 2 alpha, 1 beta, 1 beta' and 1 omega subunit. When a sigma factor is associated with the core the holoenzyme is formed, which can initiate transcription. Mg(2+) is required as a cofactor. It depends on Zn(2+) as a cofactor.

The enzyme catalyses RNA(n) + a ribonucleoside 5'-triphosphate = RNA(n+1) + diphosphate. In terms of biological role, DNA-dependent RNA polymerase catalyzes the transcription of DNA into RNA using the four ribonucleoside triphosphates as substrates. The sequence is that of DNA-directed RNA polymerase subunit beta' from Rickettsia bellii (strain OSU 85-389).